We begin with the raw amino-acid sequence, 351 residues long: Phospho-N-acetylmuramoyl-pentapeptide-transferase (351 aa).

10 consecutive transmembrane segments (helical) span residues 17–37, 62–82, 85–105, 124–144, 161–181, 190–210, 230–250, 254–274, 279–299, and 328–348; these read MAYA…HIIL, GIPT…LVFW, ILNV…FLGF, FKIY…YYFG, IDLG…ASNS, GLAI…AYLT, LVIF…FNAY, IMMG…AALI, ILFS…IIQV, and QVVI…LSTI.

It belongs to the glycosyltransferase 4 family. MraY subfamily. It depends on Mg(2+) as a cofactor.

Its subcellular location is the cell inner membrane. It carries out the reaction UDP-N-acetyl-alpha-D-muramoyl-L-alanyl-gamma-D-glutamyl-meso-2,6-diaminopimeloyl-D-alanyl-D-alanine + di-trans,octa-cis-undecaprenyl phosphate = di-trans,octa-cis-undecaprenyl diphospho-N-acetyl-alpha-D-muramoyl-L-alanyl-D-glutamyl-meso-2,6-diaminopimeloyl-D-alanyl-D-alanine + UMP. It functions in the pathway cell wall biogenesis; peptidoglycan biosynthesis. In terms of biological role, catalyzes the initial step of the lipid cycle reactions in the biosynthesis of the cell wall peptidoglycan: transfers peptidoglycan precursor phospho-MurNAc-pentapeptide from UDP-MurNAc-pentapeptide onto the lipid carrier undecaprenyl phosphate, yielding undecaprenyl-pyrophosphoryl-MurNAc-pentapeptide, known as lipid I. The polypeptide is Phospho-N-acetylmuramoyl-pentapeptide-transferase (Borrelia garinii subsp. bavariensis (strain ATCC BAA-2496 / DSM 23469 / PBi) (Borreliella bavariensis)).